Consider the following 610-residue polypeptide: DNA mismatch repair protein MutL (610 aa).

It belongs to the DNA mismatch repair MutL/HexB family.

This protein is involved in the repair of mismatches in DNA. It is required for dam-dependent methyl-directed DNA mismatch repair. May act as a 'molecular matchmaker', a protein that promotes the formation of a stable complex between two or more DNA-binding proteins in an ATP-dependent manner without itself being part of a final effector complex. The polypeptide is DNA mismatch repair protein MutL (Rickettsia africae (strain ESF-5)).